Here is a 142-residue protein sequence, read N- to C-terminus: Putative arsenate reductase (142 aa).

It belongs to the low molecular weight phosphotyrosine protein phosphatase family.

Its function is as follows. Reduces arsenate [As(V)] to arsenite [As(III)]. In Halobacterium salinarum (strain ATCC 700922 / JCM 11081 / NRC-1) (Halobacterium halobium), this protein is Putative arsenate reductase (arsC).